Here is a 207-residue protein sequence, read N- to C-terminus: Ion-translocating oxidoreductase complex subunit G (207 aa).

Residues 11-31 traverse the membrane as a helical segment; it reads GILLGFIALLCTIISAGIFFL. FMN phosphoryl threonine is present on Thr-175.

The protein belongs to the RnfG family. In terms of assembly, the complex is composed of six subunits: RnfA, RnfB, RnfC, RnfD, RnfE and RnfG. FMN is required as a cofactor.

It is found in the cell inner membrane. Functionally, part of a membrane-bound complex that couples electron transfer with translocation of ions across the membrane. The chain is Ion-translocating oxidoreductase complex subunit G from Haemophilus influenzae (strain ATCC 51907 / DSM 11121 / KW20 / Rd).